Consider the following 247-residue polypeptide: ATP synthase subunit a, chloroplastic (247 aa).

Transmembrane regions (helical) follow at residues 38–58 (QVLITSWVVIAILLGSVIIAV), 95–115 (VPFIGTMFLFIFVSNWSGALL), 133–153 (DINTTVALALPTSVAYFYAGL), 199–219 (LVVVVLVSLVPSVVPIPVMFL), and 220–240 (GLFTSGIQALIFATLAAAYIG).

The protein belongs to the ATPase A chain family. As to quaternary structure, F-type ATPases have 2 components, CF(1) - the catalytic core - and CF(0) - the membrane proton channel. CF(1) has five subunits: alpha(3), beta(3), gamma(1), delta(1), epsilon(1). CF(0) has four main subunits: a, b, b' and c.

The protein resides in the plastid. Its subcellular location is the chloroplast thylakoid membrane. Functionally, key component of the proton channel; it plays a direct role in the translocation of protons across the membrane. The polypeptide is ATP synthase subunit a, chloroplastic (Phalaenopsis aphrodite subsp. formosana (Moth orchid)).